The sequence spans 257 residues: UPF0246 protein AHA_3667 (257 aa).

This sequence belongs to the UPF0246 family.

The chain is UPF0246 protein AHA_3667 from Aeromonas hydrophila subsp. hydrophila (strain ATCC 7966 / DSM 30187 / BCRC 13018 / CCUG 14551 / JCM 1027 / KCTC 2358 / NCIMB 9240 / NCTC 8049).